Here is a 199-residue protein sequence, read N- to C-terminus: 3-isopropylmalate dehydratase small subunit (199 aa).

It belongs to the LeuD family. LeuD type 1 subfamily. In terms of assembly, heterodimer of LeuC and LeuD.

The catalysed reaction is (2R,3S)-3-isopropylmalate = (2S)-2-isopropylmalate. It participates in amino-acid biosynthesis; L-leucine biosynthesis; L-leucine from 3-methyl-2-oxobutanoate: step 2/4. Its function is as follows. Catalyzes the isomerization between 2-isopropylmalate and 3-isopropylmalate, via the formation of 2-isopropylmaleate. This Pseudoalteromonas translucida (strain TAC 125) protein is 3-isopropylmalate dehydratase small subunit.